A 429-amino-acid chain; its full sequence is Putative zinc metalloprotease aq_1964 (429 aa).

Residue His-17 coordinates Zn(2+). Glu-18 is an active-site residue. His-21 lines the Zn(2+) pocket. A helical membrane pass occupies residues 88–110 (ILIALGGPLFNFLFTILVFALVY). The PDZ domain occupies 189 to 265 (TIKVPNVQKG…AIKLKILRNG (77 aa)). Helical transmembrane passes span 369–391 (IFNL…IEWL) and 406–428 (RVGL…LRLL).

The protein belongs to the peptidase M50B family. Requires Zn(2+) as cofactor.

The protein localises to the cell inner membrane. The sequence is that of Putative zinc metalloprotease aq_1964 from Aquifex aeolicus (strain VF5).